Reading from the N-terminus, the 480-residue chain is MFS-type transporter oryF (480 aa).

Positions Met1–Arg10 are enriched in basic and acidic residues. Residues Met1–Glu24 are disordered. Low complexity predominate over residues Leu11 to Leu22. 12 helical membrane-spanning segments follow: residues Leu41–Val61, Ala81–Ser101, Ile107–Ala127, Phe138–Leu158, Leu170–Val190, Ala197–Leu217, Phe264–Leu284, Ala308–Leu328, Ile351–Ala371, Ile378–Ile398, Gly415–Ile435, and Trp443–Leu463.

Belongs to the major facilitator superfamily.

It is found in the membrane. Its function is as follows. MFS-type transporter; part of the gene cluster that mediates the biosynthesis of oryzines, natural products with an unusual maleidride backbone. The chain is MFS-type transporter oryF from Aspergillus oryzae (strain ATCC 42149 / RIB 40) (Yellow koji mold).